The primary structure comprises 64 residues: Large ribosomal subunit protein bL28 (64 aa).

The tract at residues 1-27 (MAKRDQLTGKGPLSGNTRSHAMNHSKR) is disordered.

Belongs to the bacterial ribosomal protein bL28 family.

The sequence is that of Large ribosomal subunit protein bL28 from Ureaplasma parvum serovar 3 (strain ATCC 27815 / 27 / NCTC 11736).